We begin with the raw amino-acid sequence, 217 residues long: Fucoxanthin-chlorophyll a-c binding protein A, chloroplastic (217 aa).

The N-terminal 39 residues, 1–39, are a transit peptide targeting the chloroplast; sequence MKSAVMAVACAAAPGLRRPSAFNGAALTTSAKSSSAMKM. The next 3 membrane-spanning stretches (helical) occupy residues 81-101, 122-142, and 183-203; these read IAMLAIAGHLTQQNARLPGML, IPPAGLAQIFAFIGFLELAVM, and GRAAQMGILALMVHEELNNKP.

Belongs to the fucoxanthin chlorophyll protein family. The LHC complex of chromophytic algae is composed of fucoxanthin, chlorophyll A and C bound non-covalently by fucoxanthin chlorophyll proteins (FCPs). The ratio of pigments in this LHC is; fucoxanthin: chlorophyll C: chlorophyll A; (0.6-1): (0.1-0.3): (1).

It localises to the plastid. It is found in the chloroplast thylakoid membrane. Its function is as follows. The light-harvesting complex (LHC) functions as a light receptor, it captures and delivers excitation energy to photosystems with which it is closely associated. Energy is transferred from the carotenoid and chlorophyll C (or B) to chlorophyll A and the photosynthetic reaction centers where it is used to synthesize ATP and reducing power. This is Fucoxanthin-chlorophyll a-c binding protein A, chloroplastic (FCPA) from Macrocystis pyrifera (Giant kelp).